Reading from the N-terminus, the 310-residue chain is Aspartate carbamoyltransferase catalytic subunit (310 aa).

2 residues coordinate carbamoyl phosphate: arginine 58 and threonine 59. Position 87 (lysine 87) interacts with L-aspartate. Arginine 108, histidine 136, and glutamine 139 together coordinate carbamoyl phosphate. 2 residues coordinate L-aspartate: arginine 169 and arginine 229. Leucine 268 and proline 269 together coordinate carbamoyl phosphate.

Belongs to the aspartate/ornithine carbamoyltransferase superfamily. ATCase family. In terms of assembly, heterododecamer (2C3:3R2) of six catalytic PyrB chains organized as two trimers (C3), and six regulatory PyrI chains organized as three dimers (R2).

It carries out the reaction carbamoyl phosphate + L-aspartate = N-carbamoyl-L-aspartate + phosphate + H(+). It functions in the pathway pyrimidine metabolism; UMP biosynthesis via de novo pathway; (S)-dihydroorotate from bicarbonate: step 2/3. Its function is as follows. Catalyzes the condensation of carbamoyl phosphate and aspartate to form carbamoyl aspartate and inorganic phosphate, the committed step in the de novo pyrimidine nucleotide biosynthesis pathway. This is Aspartate carbamoyltransferase catalytic subunit from Leptospira biflexa serovar Patoc (strain Patoc 1 / Ames).